The sequence spans 288 residues: Serine/threonine-protein kinase pef1 (288 aa).

Residues 3–285 (YQRLEKLGEG…GQDALQHAWF (283 aa)) form the Protein kinase domain. Residues 9–17 (LGEGTYAHV) and lysine 32 each bind ATP. Residue threonine 13 is modified to Phosphothreonine. Tyrosine 14 bears the Phosphotyrosine mark. The active-site Proton acceptor is the aspartate 126.

It belongs to the protein kinase superfamily. CMGC Ser/Thr protein kinase family. CDC2/CDKX subfamily. Interacts with the pas1 cyclin.

The catalysed reaction is L-seryl-[protein] + ATP = O-phospho-L-seryl-[protein] + ADP + H(+). It carries out the reaction L-threonyl-[protein] + ATP = O-phospho-L-threonyl-[protein] + ADP + H(+). This is Serine/threonine-protein kinase pef1 (pef1) from Schizosaccharomyces pombe (strain 972 / ATCC 24843) (Fission yeast).